We begin with the raw amino-acid sequence, 247 residues long: Phycocyanobilin:ferredoxin oxidoreductase (247 aa).

It belongs to the HY2 family.

It catalyses the reaction (2R,3Z)-phycocyanobilin + 4 oxidized [2Fe-2S]-[ferredoxin] = biliverdin IXalpha + 4 reduced [2Fe-2S]-[ferredoxin] + 4 H(+). Its function is as follows. Catalyzes the four-electron reduction of biliverdin IX-alpha (2-electron reduction at both the A and D rings); the reaction proceeds via an isolatable 2-electron intermediate, 181,182-dihydrobiliverdin. This Synechococcus sp. (strain CC9605) protein is Phycocyanobilin:ferredoxin oxidoreductase.